Here is a 643-residue protein sequence, read N- to C-terminus: Tigger transposable element-derived protein 5 (643 aa).

The disordered stretch occupies residues M1–R50. Pro residues predominate over residues P20 to R48. Residues A52 to L103 enclose the HTH psq-type domain. 2 consecutive DNA-binding regions (H-T-H motif) follow at residues Q79–D99 and P150–R183. An HTH CENPB-type domain is found at Q117–R190. Residues P197–Y236 form a disordered region. In terms of domain architecture, DDE-1 spans D238–A358. A disordered region spans residues E366–T395.

It belongs to the tigger transposable element derived protein family.

It is found in the nucleus. The sequence is that of Tigger transposable element-derived protein 5 (TIGD5) from Bos taurus (Bovine).